The sequence spans 376 residues: Carbohydrate sulfotransferase 14 (376 aa).

The Cytoplasmic segment spans residues M1–L39. A helical; Signal-anchor for type II membrane protein transmembrane segment spans residues L40–I60. The Lumenal segment spans residues E61 to Q376. N-linked (GlcNAc...) asparagine glycosylation is present at N110. 3'-phosphoadenylyl sulfate contacts are provided by residues P155–N161 and R213–S221. N-linked (GlcNAc...) asparagine glycosylation occurs at N368.

This sequence belongs to the sulfotransferase 2 family. As to expression, widely expressed. Expressed at high level in pituitary gland, placenta, uterus and thyroid.

Its subcellular location is the golgi apparatus membrane. The enzyme catalyses dermatan + n 3'-phosphoadenylyl sulfate = dermatan 4'-sulfate + n adenosine 3',5'-bisphosphate + n H(+). Functionally, catalyzes the transfer of sulfate to position 4 of the N-acetylgalactosamine (GalNAc) residue of dermatan sulfate. Plays a pivotal role in the formation of 4-0-sulfated IdoA blocks in dermatan sulfate. Transfers sulfate to the C-4 hydroxyl of beta1,4-linked GalNAc that is substituted with an alpha-linked iduronic acid (IdoUA) at the C-3 hydroxyl. Transfers sulfate more efficiently to GalNAc residues in -IdoUA-GalNAc-IdoUA- than in -GlcUA-GalNAc-GlcUA-sequences. Has preference for partially desulfated dermatan sulfate. Addition of sulfate to GalNAc may occur immediately after epimerization of GlcUA to IdoUA. Appears to have an important role in the formation of the cerebellar neural network during postnatal brain development. The sequence is that of Carbohydrate sulfotransferase 14 (CHST14) from Homo sapiens (Human).